We begin with the raw amino-acid sequence, 431 residues long: Probable sodium/metabolite cotransporter BASS3, chloroplastic (431 aa).

Residues 1–70 constitute a chloroplast transit peptide; that stretch reads MTLIASLSLP…RRNSGLVPVV (70 aa). The next 9 membrane-spanning stretches (helical) occupy residues 110 to 130, 145 to 165, 169 to 189, 198 to 218, 238 to 258, 261 to 281, 288 to 308, 325 to 345, and 387 to 407; these read FWSA…LSYP, LGGI…ALAF, VPLS…GVLV, TFYA…SSYA, IASV…VVPV, VAMS…GLVL, VVTL…SLCI, LGLI…GYWF, and VPAA…ASFW.

The protein belongs to the bile acid:sodium symporter (BASS) (TC 2.A.28) family.

It is found in the membrane. Its subcellular location is the plastid. It localises to the chloroplast envelope. In terms of biological role, may function as sodium-coupled metabolite transporter across the chloroplast envelope. The polypeptide is Probable sodium/metabolite cotransporter BASS3, chloroplastic (BASS3) (Arabidopsis thaliana (Mouse-ear cress)).